Here is a 363-residue protein sequence, read N- to C-terminus: 3-dehydroquinate synthase (363 aa).

NAD(+)-binding positions include 109–113 (GATTD), 133–134 (TT), K146, and K155. E188, H251, and H267 together coordinate Zn(2+).

This sequence belongs to the sugar phosphate cyclases superfamily. Dehydroquinate synthase family. It depends on NAD(+) as a cofactor. The cofactor is Co(2+). Requires Zn(2+) as cofactor.

The protein resides in the cytoplasm. The catalysed reaction is 7-phospho-2-dehydro-3-deoxy-D-arabino-heptonate = 3-dehydroquinate + phosphate. It functions in the pathway metabolic intermediate biosynthesis; chorismate biosynthesis; chorismate from D-erythrose 4-phosphate and phosphoenolpyruvate: step 2/7. Catalyzes the conversion of 3-deoxy-D-arabino-heptulosonate 7-phosphate (DAHP) to dehydroquinate (DHQ). The protein is 3-dehydroquinate synthase of Streptomyces avermitilis (strain ATCC 31267 / DSM 46492 / JCM 5070 / NBRC 14893 / NCIMB 12804 / NRRL 8165 / MA-4680).